Consider the following 897-residue polypeptide: DNA endonuclease RBBP8 (897 aa).

The segment at 22-45 (DLWTKLKECHDREVQGLQVKVTKL) is essential for binding to the MRN complex and for RPA focus formation on DNA damage. A coiled-coil region spans residues 35 to 84 (VQGLQVKVTKLKQERILDAQRLEEFFTKNQQLREQQKVLHETIKVLEDRL). The tract at residues 45–160 (LKQERILDAQ…AELECEEDVI (116 aa)) is required for interaction with LMO4, probably by stabilizing the interaction through RPPB8 dimerization. Glycyl lysine isopeptide (Lys-Gly) (interchain with G-Cter in SUMO2) cross-links involve residues Lys-62 and Lys-115. A coiled-coil region spans residues 117–138 (ITELMNERNTLQEENKKLSEQL). Lys-193 is covalently cross-linked (Glycyl lysine isopeptide (Lys-Gly) (interchain with G-Cter in SUMO2)). Phosphoserine is present on residues Ser-233 and Ser-276. Positions 292–307 (KQPFEESTRNTEDSLR) are enriched in basic and acidic residues. Positions 292–325 (KQPFEESTRNTEDSLRFSDSTSKTPPQEELPTRV) are disordered. Residue Thr-315 is modified to Phosphothreonine; by CDK2. Ser-326, Ser-327, and Ser-349 each carry phosphoserine. Glycyl lysine isopeptide (Lys-Gly) (interchain with G-Cter in SUMO2) cross-links involve residues Lys-360 and Lys-378. Ser-379 bears the Phosphoserine mark. Residues Lys-396, Lys-404, and Lys-410 each participate in a glycyl lysine isopeptide (Lys-Gly) (interchain with G-Cter in SUMO2) cross-link. Residues 419–464 (QNRTEYGKDSNTDKHLEPLKSLGGRTSKRKKTEEESEHEVSCPQAS) are disordered. A compositionally biased stretch (basic and acidic residues) spans 420-436 (NRTEYGKDSNTDKHLEP). Residues Lys-438 and Lys-449 each participate in a glycyl lysine isopeptide (Lys-Gly) (interchain with G-Cter in SUMO2) cross-link. Positions 490–494 (PLDLS) match the PXDLS motif motif. A damage-recruitment motif region spans residues 509–557 (SETSKNKFRQVTLYEALKTIPKGFSSSRKASDGNCTLPKDSPGEPCSQE). A Glycyl lysine isopeptide (Lys-Gly) (interchain with G-Cter in SUMO2); alternate cross-link involves residue Lys-526. Residues Lys-530, Lys-572, and Lys-578 each participate in a glycyl lysine isopeptide (Lys-Gly) (interchain with G-Cter in SUMO2) cross-link. Lys-604 is covalently cross-linked (Glycyl lysine isopeptide (Lys-Gly) (interchain with G-Cter in SUMO2); alternate). Glycyl lysine isopeptide (Lys-Gly) (interchain with G-Cter in SUMO2) cross-links involve residues Lys-613, Lys-638, and Lys-640. Positions 641–685 (SLQNNQDVSFENIQWSIDPGADLSQYKMDVTVIDTKDGSQSKLGG) are required for interaction with LMO4, probably by making physical contact with LMO4. A Phosphoserine; by ATM modification is found at Ser-664. Lys-676 is covalently cross-linked (Glycyl lysine isopeptide (Lys-Gly) (interchain with G-Cter in SUMO2)). Ser-679 is subject to Phosphoserine. The segment at 704–723 (KKQEQKGEKSSNEERKMNDS) is disordered. Lys-719 is covalently cross-linked (Glycyl lysine isopeptide (Lys-Gly) (interchain with G-Cter in SUMO2)). Ser-723 bears the Phosphoserine mark. Ser-745 bears the Phosphoserine; by ATM mark. A Glycyl lysine isopeptide (Lys-Gly) (interchain with G-Cter in SUMO2) cross-link involves residue Lys-782. A KLHL15-binding motif is present at residues 840-842 (FRY). A Phosphothreonine; by CDK1 modification is found at Thr-847. Thr-859 bears the Phosphothreonine; by ATR mark. Residue Lys-869 forms a Glycyl lysine isopeptide (Lys-Gly) (interchain with G-Cter in SUMO2) linkage. Residues 873–897 (DPCPRPKRRQPYNAIFSPKGKEQKT) are disordered.

Belongs to the COM1/SAE2/CtIP family. Homotetramer; formed by antiparallel association of helical extensions protruding from the N-termini of two parallel coiled-coil dimers. Forms a dumbbell-shaped particle in which polar globular domains are held about 30 nm apart by a central rod. Homotetramerization is required for DNA-end resection and repair. Interacts (via the PXDLS motif) with CTBP1; the interaction is disrupted via binding of the adenovirus E1A to CTBP1. Component of the BRCA1-RBBP8 complex. Interacts (the Ser-327 phosphorylated form) with BRCA1 (via the C-terminal BRCT domains): the interaction occurs in the G2 phase, ubiquitinates RBBP8 and involves RBBP8 in BRCA1-dependent G2/M checkpoint control on DNA damage. Interacts with RB1. Interacts with the MRN complex; interacts directly with MRE11; the interaction is required for efficient homologous recombination (HR) and regulation of the MRN complex. Interacts directly with RAD50. Interacts (when phosphorylated by CDK1) with NBN; promoting association with the MRN complex. Interacts with LM04 (via the LIM zinc-binding 1 domain). Interacts with SIAH1. Interacts with RNF138. Interacts with EXD2. Interacts with CUL3 and KLHL15; this interaction leads to RBBP8 proteasomal degradation. Directly interacts with PIN1; this interaction depends upon RBBP8 phosphorylation, predominantly at Thr-315. Interacts with FZR1; this interaction leads to APC/C-mediated RBBP8 proteasomal degradation. Interacts with AUNIP; leading to recruitment of RBBP8 to sites of DNA damage. Interacts with SAMHD1. Interacts with HDGFL2. Hyperphosphorylation upon ionizing radiation results in dissociation from BRCA1. Phosphorylation at Thr-847 by CDK1 is essential for the recruitment to DNA and the DNA repair function. Phosphorylation at Thr-847 and Thr-859 promote interaction with NBN and recruitment to double-strand breaks (DSBs). Phosphorylated on Ser-327 as cells enter G2 phase. This phosphorylation is required for binding BRCA1 and for the G2/M DNA damage transition checkpoint control. Phosphorylation at Thr-315, probably catalyzed by CDK2, is required for PIN1-binding, while phosphorylation at Ser-276 serves as a PIN1 isomerization site. Phosphorylation at Thr-315 is cell-cycle dependent. It steadily increases during S phase, peaks at late S/G2 phase, and drops at G1. Phosphorylation is not required for tetramerization. Binds to DNA more strongly when dephosphorylated. In terms of processing, ubiquitinated. Ubiquitination at multiple sites by BRCA1 (via its N-terminal RING domain) does not lead to its proteasomal degradation but instead the ubiquitinated RBBP8 binds to chromatin following DNA damage and may play a role in G2/M checkpoint control. Ubiquitinated by RNF138 at its N-terminus. Ubiquitinated through 'Lys-48' by the E3 CUL3-KLHL15 complex; this modification leads to proteasomal degradation. Ubiquitinated by the E3 FZR1/APC/C complex; this modification leads to proteasomal degradation. Expressed in ER-positive breast cancer lines, but tends to be down-regulated ER-negative cells (at protein level).

It is found in the nucleus. The protein localises to the chromosome. In terms of biological role, endonuclease that cooperates with the MRE11-RAD50-NBN (MRN) complex in DNA-end resection, the first step of double-strand break (DSB) repair through the homologous recombination (HR) pathway. HR is restricted to S and G2 phases of the cell cycle and preferentially repairs DSBs resulting from replication fork collapse. Key determinant of DSB repair pathway choice, as it commits cells to HR by preventing classical non-homologous end-joining (NHEJ). Specifically promotes the endonuclease activity of the MRN complex to clear DNA ends containing protein adducts: recruited to DSBs by NBN following phosphorylation by CDK1, and promotes the endonuclease activity of MRE11 to clear protein-DNA adducts and generate clean double-strand break ends. Functions downstream of the MRN complex and ATM, promotes ATR activation and its recruitment to DSBs in the S/G2 phase facilitating the generation of ssDNA. Component of the BRCA1-RBBP8 complex that regulates CHEK1 activation and controls cell cycle G2/M checkpoints on DNA damage. During immunoglobulin heavy chain class-switch recombination, promotes microhomology-mediated alternative end joining (A-NHEJ) and plays an essential role in chromosomal translocations. Binds preferentially to DNA Y-junctions and to DNA substrates with blocked ends and promotes intermolecular DNA bridging. The sequence is that of DNA endonuclease RBBP8 (RBBP8) from Homo sapiens (Human).